The following is a 461-amino-acid chain: Phosphomethylpyrimidine synthase (461 aa).

Residues Asn-80, Met-109, Tyr-138, His-173, 193-195 (SRG), 234-237 (DGLR), and Glu-273 contribute to the substrate site. Residue His-277 participates in Zn(2+) binding. Position 300 (Tyr-300) interacts with substrate. Residue His-341 participates in Zn(2+) binding. The [4Fe-4S] cluster site is built by Cys-421, Cys-424, and Cys-429.

It belongs to the ThiC family. [4Fe-4S] cluster serves as cofactor.

It carries out the reaction 5-amino-1-(5-phospho-beta-D-ribosyl)imidazole + S-adenosyl-L-methionine = 4-amino-2-methyl-5-(phosphooxymethyl)pyrimidine + CO + 5'-deoxyadenosine + formate + L-methionine + 3 H(+). It participates in cofactor biosynthesis; thiamine diphosphate biosynthesis. Functionally, catalyzes the synthesis of the hydroxymethylpyrimidine phosphate (HMP-P) moiety of thiamine from aminoimidazole ribotide (AIR) in a radical S-adenosyl-L-methionine (SAM)-dependent reaction. The chain is Phosphomethylpyrimidine synthase from Solibacter usitatus (strain Ellin6076).